A 497-amino-acid chain; its full sequence is Probable gamma-aminobutyrate transaminase 2, mitochondrial (497 aa).

A mitochondrion-targeting transit peptide spans 1 to 37 (MNLIKHAAFAASFQGETDCTSHASARKFSTSGSSPLL). A pyridoxal 5'-phosphate-binding site is contributed by 153 to 154 (GS). Residue tyrosine 186 participates in substrate binding. Aspartate 293 contacts pyridoxal 5'-phosphate. Residue lysine 322 participates in substrate binding. Position 322 is an N6-(pyridoxal phosphate)lysine (lysine 322).

It belongs to the class-III pyridoxal-phosphate-dependent aminotransferase family.

It is found in the mitochondrion. The catalysed reaction is 4-aminobutanoate + pyruvate = succinate semialdehyde + L-alanine. It catalyses the reaction 4-aminobutanoate + glyoxylate = succinate semialdehyde + glycine. In terms of biological role, transaminase that degrades gamma-amino butyric acid (GABA). This chain is Probable gamma-aminobutyrate transaminase 2, mitochondrial, found in Oryza sativa subsp. indica (Rice).